A 485-amino-acid chain; its full sequence is Cysteine--tRNA ligase (485 aa).

A Zn(2+)-binding site is contributed by Cys27. The 'HIGH' region signature appears at 29–39 (ITAYDLCHIGH). Cys208, His233, and Glu237 together coordinate Zn(2+). The 'KMSKS' region signature appears at 265–269 (KMSKS). Lys268 contacts ATP.

Belongs to the class-I aminoacyl-tRNA synthetase family. Monomer. Zn(2+) is required as a cofactor.

It is found in the cytoplasm. The enzyme catalyses tRNA(Cys) + L-cysteine + ATP = L-cysteinyl-tRNA(Cys) + AMP + diphosphate. The polypeptide is Cysteine--tRNA ligase (Nitratidesulfovibrio vulgaris (strain DSM 19637 / Miyazaki F) (Desulfovibrio vulgaris)).